The following is a 377-amino-acid chain: Chaperone protein DnaJ (377 aa).

A J domain is found at aspartate 5–glycine 70. Residues glycine 133–serine 211 form a CR-type zinc finger. Positions 146, 149, 163, 166, 185, 188, 199, and 202 each coordinate Zn(2+). CXXCXGXG motif repeat units follow at residues cysteine 146–glycine 153, cysteine 163–glycine 170, cysteine 185–glycine 192, and cysteine 199–glycine 206.

The protein belongs to the DnaJ family. As to quaternary structure, homodimer. It depends on Zn(2+) as a cofactor.

It is found in the cytoplasm. Its function is as follows. Participates actively in the response to hyperosmotic and heat shock by preventing the aggregation of stress-denatured proteins and by disaggregating proteins, also in an autonomous, DnaK-independent fashion. Unfolded proteins bind initially to DnaJ; upon interaction with the DnaJ-bound protein, DnaK hydrolyzes its bound ATP, resulting in the formation of a stable complex. GrpE releases ADP from DnaK; ATP binding to DnaK triggers the release of the substrate protein, thus completing the reaction cycle. Several rounds of ATP-dependent interactions between DnaJ, DnaK and GrpE are required for fully efficient folding. Also involved, together with DnaK and GrpE, in the DNA replication of plasmids through activation of initiation proteins. The sequence is that of Chaperone protein DnaJ from Shewanella baltica (strain OS195).